Reading from the N-terminus, the 61-residue chain is Temporin-CG3 (61 aa).

Residues 1–22 form the signal peptide; sequence MFTMKKPLLLLFFLATINLSLC. Positions 23–44 are cleaved as a propeptide — removed in mature form; the sequence is EQERNAEEERRDEPDERNAEVE.

This sequence belongs to the frog skin active peptide (FSAP) family. Temporin subfamily. As to expression, expressed by the skin glands.

The protein localises to the secreted. Functionally, antimicrobial peptide active against a variety of Gram-positive bacterial strains but not against Gram-negative bacteria. Has weak antifungal activity against a slime mold isolate. Has weak hemolytic activity against human erythrocytes. This Amolops chunganensis (Chungan torrent frog) protein is Temporin-CG3.